Reading from the N-terminus, the 798-residue chain is Integrin beta-7 (798 aa).

Positions 1–19 are cleaved as a signal peptide; it reads MVALPMVLVLLLVLSRGES. At 20 to 723 the chain is on the extracellular side; it reads ELDAKIPSTG…VRPQEKGADH (704 aa). The PSI domain maps to 44-92; it reads SCQPAPSCQKCILSHPSCAWCKQLNFTASGEAEARRCARREELLARGCP. 7 cysteine pairs are disulfide-bonded: Cys51–Cys476, Cys54–Cys80, Cys64–Cys91, Cys216–Cys223, Cys271–Cys311, Cys412–Cys428, and Cys448–Cys474. The N-linked (GlcNAc...) asparagine glycan is linked to Asn68. A disordered region spans residues 98–124; sequence EPRGQQEVLQDQPLSQGARGEGATQLA. One can recognise a VWFA domain in the interval 150 to 389; sequence YPVDLYYLMD…QLIMDAYNSL (240 aa). Residues Ser161 and Ser163 each coordinate Mg(2+). 4 residues coordinate Ca(2+): Ser163, Asp166, Asp167, and Asp198. 4 residues coordinate Ca(2+): Asn254, Asp256, Pro258, and Glu259. Glu259 is a Mg(2+) binding site. The N-linked (GlcNAc...) asparagine glycan is linked to Asn279. Residues Asp289 and Glu373 each coordinate Ca(2+). Asn434 is a glycosylation site (N-linked (GlcNAc...) asparagine). Asn477 carries N-linked (GlcNAc...) asparagine glycosylation. Cystine bridges form between Cys478–Cys497, Cys488–Cys500, Cys502–Cys511, Cys513–Cys545, Cys527–Cys543, Cys537–Cys548, Cys550–Cys559, Cys561–Cys582, Cys566–Cys580, Cys574–Cys585, Cys587–Cys596, Cys598–Cys621, Cys605–Cys619, Cys613–Cys624, Cys626–Cys635, Cys638–Cys641, Cys645–Cys688, Cys651–Cys670, and Cys654–Cys666. 4 I-EGF domains span residues 478 to 512, 513 to 560, 561 to 597, and 598 to 636; these read CSDT…RLCE, CSVA…HLCE, CDDA…RACE, and CSGD…ALCD. The N-linked (GlcNAc...) asparagine glycan is linked to Asn531. A glycan (N-linked (GlcNAc...) asparagine) is linked at Asn590. N-linked (GlcNAc...) asparagine glycans are attached at residues Asn665 and Asn674. A helical membrane pass occupies residues 724-746; it reads TQAIVLGCVGGIVAVGLGLVLAY. Topologically, residues 747–798 are cytoplasmic; the sequence is RLSVEIYDRREYSRFEKEQQQLNWKQDSNPLYKSAITTTINPRFQEADSPTL. Phosphotyrosine; by Tyr-kinases is present on Tyr778.

It belongs to the integrin beta chain family. As to quaternary structure, heterodimer of an alpha and a beta subunit. ITGB7/beta-7 associates with either ITGA4/alpha-4 or ITGAE/alpha-E. Integrin ITGA4/ITGB7 interacts with MADCAM1. Integrin ITGA4/ITGB7 interacts with VCAM1 and fibronectin. Interacts with FLNA (via filamin repeats 4, 9, 12, 17, 19, 21, and 23). (Microbial infection) May interact with HIV-1 gp120. As to expression, expressed in a variety of leukocyte lines.

The protein resides in the cell membrane. Its function is as follows. Integrin ITGA4/ITGB7 (alpha-4/beta-7) (Peyer patches-specific homing receptor LPAM-1) is an adhesion molecule that mediates lymphocyte migration and homing to gut-associated lymphoid tissue (GALT). Integrin ITGA4/ITGB7 interacts with the cell surface adhesion molecules MADCAM1 which is normally expressed by the vascular endothelium of the gastrointestinal tract. Also interacts with VCAM1 and fibronectin, an extracellular matrix component. It recognizes one or more domains within the alternatively spliced CS-1 region of fibronectin. Interactions involve the tripeptide L-D-T in MADCAM1, and L-D-V in fibronectin. Integrin ITGAE/ITGB7 (alpha-E/beta-7, HML-1) is a receptor for E-cadherin. In terms of biological role, (Microbial infection) Binds to HIV-1 gp120, thereby allowing the virus to enter GALT, which is thought to be the major trigger of AIDS disease. Interaction would involve a tripeptide L-D-I in HIV-1 gp120. The sequence is that of Integrin beta-7 (ITGB7) from Homo sapiens (Human).